The primary structure comprises 88 residues: Exodeoxyribonuclease 7 small subunit (88 aa).

The disordered stretch occupies residues A69–A88.

The protein belongs to the XseB family. Heterooligomer composed of large and small subunits.

The protein localises to the cytoplasm. It catalyses the reaction Exonucleolytic cleavage in either 5'- to 3'- or 3'- to 5'-direction to yield nucleoside 5'-phosphates.. Its function is as follows. Bidirectionally degrades single-stranded DNA into large acid-insoluble oligonucleotides, which are then degraded further into small acid-soluble oligonucleotides. The polypeptide is Exodeoxyribonuclease 7 small subunit (Streptomyces coelicolor (strain ATCC BAA-471 / A3(2) / M145)).